Consider the following 308-residue polypeptide: Snake venom metalloprotease inhibitor 02D01 (308 aa).

The N-terminal stretch at 1–23 is a signal peptide; the sequence is MFVSRLAASGLLLLSLLALSLDG. Residues 24-38 constitute a propeptide that is removed on maturation; that stretch reads KPLPQRQPHHIQPME. Q39 carries the post-translational modification Pyrrolidone carboxylic acid. Residues 42-50 constitute a propeptide that is removed on maturation; the sequence is LAPDAPPLE. Position 51 is a pyrrolidone carboxylic acid (Q51). Positions 54–62 are excised as a propeptide; that stretch reads LAPDAPPLE. Pyrrolidone carboxylic acid is present on Q63. A propeptide spanning residues 66 to 74 is cleaved from the precursor; the sequence is LAPAAPPLE. Q75 carries the pyrrolidone carboxylic acid modification. Positions 78 to 86 are excised as a propeptide; sequence LAPDAPPME. The residue at position 87 (Q87) is a Pyrrolidone carboxylic acid. Residues 90-98 constitute a propeptide that is removed on maturation; sequence LAPDAPPME. The residue at position 99 (Q99) is a Pyrrolidone carboxylic acid. A propeptide spanning residues 102–110 is cleaved from the precursor; that stretch reads LAPDAPPME. Q111 is subject to Pyrrolidone carboxylic acid. Residues 114–122 constitute a propeptide that is removed on maturation; it reads LAPDAPPME. Q123 carries the pyrrolidone carboxylic acid modification. Positions 126–134 are excised as a propeptide; the sequence is LAPDAAPLE. Q135 carries the pyrrolidone carboxylic acid modification. The propeptide occupies 138–146; it reads LAPDAPPME. Pyrrolidone carboxylic acid is present on Q147. Positions 150 to 158 are excised as a propeptide; sequence LAPDAPPME. A Pyrrolidone carboxylic acid modification is found at Q159. Residues 162–249 constitute a propeptide that is removed on maturation; that stretch reads QPQIPSLMEQ…KQASQKWGRL (88 aa). Residues 172–182 are compositionally biased toward polar residues; sequence RQLSSGGTTAL. Disordered stretches follow at residues 172-228 and 252-279; these read RQLS…AAAT and HDHDHHHHHHPGSSVGGGGGGGGGGARR. The segment covering 198–209 has biased composition (gly residues); the sequence is VVGGGGGGGGGS. Residues 210-227 show a composition bias toward low complexity; it reads KAALALPKPPKAKGAAAA. Positions 265–277 are enriched in gly residues; sequence SVGGGGGGGGGGA. Residues 278 to 286 constitute a propeptide that is removed on maturation; the sequence is RRLKGLAKK. The cysteines at positions 292 and 308 are disulfide-linked.

The protein in the C-terminal section; belongs to the natriuretic peptide family. In the central section; belongs to the pHpG family. Expressed by the venom gland.

The protein localises to the secreted. PEKW and poly-His-poly-Gly peptides may serve as metalloproteinase inhibitors during glandular storage. Their inhibition may be instantly disengaged, by dilution or physiochemical change, when venom is injected into tissue of the prey. Its function is as follows. has a vasorelaxant activity in rat aortic strips and a diuretic potency in anesthetized rats. May act by activating natriuretic receptors (NPR1 and/or NPR2). The chain is Snake venom metalloprotease inhibitor 02D01 from Echis ocellatus (Ocellated saw-scaled viper).